Consider the following 237-residue polypeptide: Ribosomal RNA large subunit methyltransferase E (237 aa).

Residues Gly-76, Trp-78, Asp-99, Asp-115, and Asp-139 each coordinate S-adenosyl-L-methionine. Catalysis depends on Lys-179, which acts as the Proton acceptor.

This sequence belongs to the class I-like SAM-binding methyltransferase superfamily. RNA methyltransferase RlmE family.

It localises to the cytoplasm. The catalysed reaction is uridine(2552) in 23S rRNA + S-adenosyl-L-methionine = 2'-O-methyluridine(2552) in 23S rRNA + S-adenosyl-L-homocysteine + H(+). Functionally, specifically methylates the uridine in position 2552 of 23S rRNA at the 2'-O position of the ribose in the fully assembled 50S ribosomal subunit. The sequence is that of Ribosomal RNA large subunit methyltransferase E from Rhodopseudomonas palustris (strain ATCC BAA-98 / CGA009).